We begin with the raw amino-acid sequence, 1077 residues long: Rap guanine nucleotide exchange factor 1 (1077 aa).

A Glycyl lysine isopeptide (Lys-Gly) (interchain with G-Cter in SUMO2) cross-link involves residue leucine 57. Disordered stretches follow at residues 207 to 235 (IEKQ…AELP) and 248 to 300 (TGMS…PTRV). Residues 213–228 (PSPTSPVKPSSPASKP) are compositionally biased toward low complexity. 5 positions are modified to phosphoserine: serine 281, serine 293, serine 314, serine 335, and serine 360. The short motif at 281–292 (SPPPALPPKKRQ) is the SH3-binding element. Disordered stretches follow at residues 336–376 (GGSH…QCSR) and 411–494 (LSPL…EDLQ). The span at 358 to 371 (SKSDEQLSSLDRDS) shows a compositional bias: basic and acidic residues. Positions 451-462 (DTPPALPEKKRR) match the SH3-binding motif. A compositionally biased stretch (polar residues) spans 484 to 494 (QYDNISGEDLQ). The residue at position 504 (tyrosine 504) is a Phosphotyrosine; by HCK. 2 short sequence motifs (SH3-binding) span residues 538–549 (EKPPPLPEKKNK) and 606–617 (APPPALPPKQRQ). The interval 600–670 (DSVQELAPPP…SEEEVDELSL (71 aa)) is disordered. Over residues 640–651 (KDSRDGSERAPK) the composition is skewed to basic and acidic residues. The span at 660-669 (QSEEEVDELS) shows a compositional bias: acidic residues. Residues 688–810 (DGPDVRGGSG…LRKNILDKVD (123 aa)) enclose the N-terminal Ras-GEF domain. Residues 840–1064 (HSHEIAEQLT…WELSLKIKPR (225 aa)) enclose the Ras-GEF domain.

Interacts with HCK (via SH3-binding sites). Interacts with CRK (via SH3-binding sites). Post-translationally, phosphorylation at Tyr-504 enhances activity as Rap guanine nucleotide exchange factor. Ubiquitously expressed in adult and fetus. Expression is high in adult skeletal muscle and placenta and in fetal brain and heart. Low levels of expression in adult and fetal liver.

It is found in the early endosome. Guanine nucleotide-releasing protein that binds to SH3 domain of CRK and GRB2/ASH. Transduces signals from CRK to activate RAS. Involved in cell branching and adhesion mediated by BCAR1-CRK-RAPGEF1 signaling and activation of RAP1. Plays a role in the establishment of basal endothelial barrier function. Plays a role in nerve growth factor (NGF)-induced sustained activation of Rap1 and neurite outgrowth. This chain is Rap guanine nucleotide exchange factor 1 (RAPGEF1), found in Homo sapiens (Human).